Here is a 411-residue protein sequence, read N- to C-terminus: 2,3-bisphosphoglycerate-independent phosphoglycerate mutase (411 aa).

A disordered region spans residues valine 164–lysine 190.

This sequence belongs to the BPG-independent phosphoglycerate mutase family. A-PGAM subfamily.

It catalyses the reaction (2R)-2-phosphoglycerate = (2R)-3-phosphoglycerate. Its pathway is carbohydrate degradation; glycolysis; pyruvate from D-glyceraldehyde 3-phosphate: step 3/5. Functionally, catalyzes the interconversion of 2-phosphoglycerate and 3-phosphoglycerate. The chain is 2,3-bisphosphoglycerate-independent phosphoglycerate mutase from Methanoculleus marisnigri (strain ATCC 35101 / DSM 1498 / JR1).